The chain runs to 75 residues: U6-lycotoxin-Ls1d (75 aa).

An N-terminal signal peptide occupies residues 1–21 (MKLLFFTALVLVVISLIEVEA). Residues 22–25 (ENER) constitute a propeptide that is removed on maturation.

Belongs to the neurotoxin 19 (CSTX) family. 06 (U6-Lctx) subfamily. In terms of processing, contains 4 disulfide bonds. Expressed by the venom gland.

The protein resides in the secreted. This Lycosa singoriensis (Wolf spider) protein is U6-lycotoxin-Ls1d.